Here is a 238-residue protein sequence, read N- to C-terminus: Probable xyloglucan-specific endo-beta-1,4-glucanase A (238 aa).

The N-terminal stretch at 1–18 is a signal peptide; the sequence is MKLSLSVALSLAASTAQA. 2 N-linked (GlcNAc...) asparagine glycosylation sites follow: Asn-106 and Asn-171.

Belongs to the glycosyl hydrolase 12 (cellulase H) family.

The protein localises to the secreted. It carries out the reaction xyloglucan + H2O = xyloglucan oligosaccharides.. Catalyzes endohydrolysis of 1,4-beta-D-glucosidic linkages in xyloglucan with retention of the beta-configuration of the glycosyl residues. Specific for xyloglucan and does not hydrolyze other cell wall components. This chain is Probable xyloglucan-specific endo-beta-1,4-glucanase A (xgeA), found in Aspergillus fumigatus (strain ATCC MYA-4609 / CBS 101355 / FGSC A1100 / Af293) (Neosartorya fumigata).